Reading from the N-terminus, the 246-residue chain is U2 small nuclear ribonucleoprotein A' (246 aa).

LRR repeat units lie at residues 19 to 40, 42 to 63, 64 to 85, and 88 to 109; these read RDRE…GVTR, QNDA…PLLQ, QLKT…IGHS, and ALHS…VHLS. The LRRCT domain occupies 122 to 160; sequence TPASREAQYREFVIWKLPQVRVLDYQRIKDKERARAKDL.

The protein belongs to the U2 small nuclear ribonucleoprotein A family. Associated with the spliceosome.

The protein resides in the nucleus. Involved in pre-mRNA splicing. The chain is U2 small nuclear ribonucleoprotein A' (LEA1) from Mycosarcoma maydis (Corn smut fungus).